The primary structure comprises 402 residues: Nodulation protein E (402 aa).

The Ketosynthase family 3 (KS3) domain maps to 2–401 (DRRVVITGMG…GTNAVLAFKQ (400 aa)). Catalysis depends on for beta-ketoacyl synthase activity residues cysteine 162, histidine 294, and histidine 331. The chain crosses the membrane as a helical span at residues 329 to 348 (HAHCIGAASALEMIACVMAI).

The protein belongs to the thiolase-like superfamily. Beta-ketoacyl-ACP synthases family.

It is found in the cell inner membrane. Its function is as follows. Proposed to synthesize NOD factor fatty acyl chain. Involved in the synthesis of a highly unsaturated fatty acid moiety, which forms part of a lipo-oligosaccharide that is responsible for host specificity. This chain is Nodulation protein E (nodE), found in Rhizobium meliloti (strain 1021) (Ensifer meliloti).